A 526-amino-acid polypeptide reads, in one-letter code: Cholesterol side-chain cleavage enzyme, mitochondrial (526 aa).

The transit peptide at 1-36 (MLAKGLCLRSVLVKSCQPFLSPVWQGPGLATGNGAG) directs the protein to the mitochondrion. Residue Cys459 coordinates heme.

The protein belongs to the cytochrome P450 family. Interacts with FDX1/adrenodoxin. Heme is required as a cofactor. Expressed in the kidney where it localizes to the distal convoluted tubule and the thick ascending limb of the loop of Henle (at protein level). In the ovary, highly expressed in interstitial cells (at protein level). Also expressed in adrenal gland and testis.

It is found in the mitochondrion inner membrane. The enzyme catalyses 6 reduced [adrenodoxin] + cholesterol + 3 O2 + 6 H(+) = 4-methylpentanal + pregnenolone + 6 oxidized [adrenodoxin] + 4 H2O. The catalysed reaction is 2 reduced [adrenodoxin] + cholesterol + O2 + 2 H(+) = (22R)-hydroxycholesterol + 2 oxidized [adrenodoxin] + H2O. It catalyses the reaction (22R)-hydroxycholesterol + 2 reduced [adrenodoxin] + O2 + 2 H(+) = (20R,22R)-20,22-dihydroxycholesterol + 2 oxidized [adrenodoxin] + H2O. It carries out the reaction (20R,22R)-20,22-dihydroxycholesterol + 2 reduced [adrenodoxin] + O2 + 2 H(+) = 4-methylpentanal + pregnenolone + 2 oxidized [adrenodoxin] + 2 H2O. It functions in the pathway lipid metabolism; C21-steroid hormone metabolism. Its pathway is steroid metabolism; cholesterol metabolism. A cytochrome P450 monooxygenase that catalyzes the side-chain hydroxylation and cleavage of cholesterol to pregnenolone, the precursor of most steroid hormones. Catalyzes three sequential oxidation reactions of cholesterol, namely the hydroxylation at C22 followed with the hydroxylation at C20 to yield 20R,22R-hydroxycholesterol that is further cleaved between C20 and C22 to yield the C21-steroid pregnenolone and 4-methylpentanal. Mechanistically, uses molecular oxygen inserting one oxygen atom into a substrate and reducing the second into a water molecule. Two electrons are provided by NADPH via a two-protein mitochondrial transfer system comprising flavoprotein FDXR (adrenodoxin/ferredoxin reductase) and nonheme iron-sulfur protein FDX1 or FDX2 (adrenodoxin/ferredoxin). The protein is Cholesterol side-chain cleavage enzyme, mitochondrial of Rattus norvegicus (Rat).